A 221-amino-acid polypeptide reads, in one-letter code: Deoxyribose-phosphate aldolase (221 aa).

Asp89 (proton donor/acceptor) is an active-site residue. Lys151 serves as the catalytic Schiff-base intermediate with acetaldehyde. Catalysis depends on Lys180, which acts as the Proton donor/acceptor.

This sequence belongs to the DeoC/FbaB aldolase family. DeoC type 1 subfamily.

It localises to the cytoplasm. It catalyses the reaction 2-deoxy-D-ribose 5-phosphate = D-glyceraldehyde 3-phosphate + acetaldehyde. The protein operates within carbohydrate degradation; 2-deoxy-D-ribose 1-phosphate degradation; D-glyceraldehyde 3-phosphate and acetaldehyde from 2-deoxy-alpha-D-ribose 1-phosphate: step 2/2. Its function is as follows. Catalyzes a reversible aldol reaction between acetaldehyde and D-glyceraldehyde 3-phosphate to generate 2-deoxy-D-ribose 5-phosphate. The chain is Deoxyribose-phosphate aldolase from Mesomycoplasma hyopneumoniae (strain J / ATCC 25934 / NCTC 10110) (Mycoplasma hyopneumoniae).